The chain runs to 341 residues: Protein pelota homolog (341 aa).

The protein belongs to the eukaryotic release factor 1 family. Pelota subfamily. As to quaternary structure, monomer. A divalent metal cation is required as a cofactor.

The protein localises to the cytoplasm. May function in recognizing stalled ribosomes, interact with stem-loop structures in stalled mRNA molecules, and effect endonucleolytic cleavage of the mRNA. May play a role in the release non-functional ribosomes and degradation of damaged mRNAs. Has endoribonuclease activity. This chain is Protein pelota homolog, found in Metallosphaera sedula (strain ATCC 51363 / DSM 5348 / JCM 9185 / NBRC 15509 / TH2).